The sequence spans 206 residues: Thymidylate kinase (206 aa).

11-18 (GIDGAGKT) contacts ATP.

It belongs to the thymidylate kinase family.

It catalyses the reaction dTMP + ATP = dTDP + ADP. Functionally, phosphorylation of dTMP to form dTDP in both de novo and salvage pathways of dTTP synthesis. This chain is Thymidylate kinase, found in Burkholderia lata (strain ATCC 17760 / DSM 23089 / LMG 22485 / NCIMB 9086 / R18194 / 383).